The sequence spans 188 residues: MSQDDLEIDLDAIQRRMDGAMHALRTEFGSLRTGRASASILEPIHVDAYGQQTPLNQLGTINVPEPRMVVINVWDKGMISKVERAIRDSGIGINPVVDGPIIRLPIPELNEERRKELSKVAAHYAEQARVAIRNVRRDGMDQIKKAKSVGMAEDDQKMWSDEVQALTDKAIAAVDKALEEKQKEIMQV.

This sequence belongs to the RRF family.

It localises to the cytoplasm. Its function is as follows. Responsible for the release of ribosomes from messenger RNA at the termination of protein biosynthesis. May increase the efficiency of translation by recycling ribosomes from one round of translation to another. This is Ribosome-recycling factor from Cereibacter sphaeroides (strain ATCC 17023 / DSM 158 / JCM 6121 / CCUG 31486 / LMG 2827 / NBRC 12203 / NCIMB 8253 / ATH 2.4.1.) (Rhodobacter sphaeroides).